Consider the following 226-residue polypeptide: Glyceraldehyde 3-phosphate phosphatase (226 aa).

Belongs to the HAD-like hydrolase superfamily. It depends on Mg(2+) as a cofactor.

In terms of biological role, catalyzes the dephosphorylation of D,L-glyceraldehyde 3-phosphate in vitro. The polypeptide is Glyceraldehyde 3-phosphate phosphatase (Methanothermobacter thermautotrophicus (strain ATCC 29096 / DSM 1053 / JCM 10044 / NBRC 100330 / Delta H) (Methanobacterium thermoautotrophicum)).